The sequence spans 234 residues: Lactate utilization protein C 1 (234 aa).

The protein belongs to the LutC/YkgG family.

Is involved in L-lactate degradation and allows cells to grow with lactate as the sole carbon source. This chain is Lactate utilization protein C 1, found in Bacillus mycoides (strain KBAB4) (Bacillus weihenstephanensis).